A 218-amino-acid chain; its full sequence is Elongation factor Ts (218 aa).

The tract at residues 82–85 (TDFV) is involved in Mg(2+) ion dislocation from EF-Tu.

It belongs to the EF-Ts family.

The protein resides in the cytoplasm. Associates with the EF-Tu.GDP complex and induces the exchange of GDP to GTP. It remains bound to the aminoacyl-tRNA.EF-Tu.GTP complex up to the GTP hydrolysis stage on the ribosome. The sequence is that of Elongation factor Ts from Prochlorococcus marinus (strain MIT 9211).